A 327-amino-acid chain; its full sequence is Asnovolin J 5',6'-dehydrogenase nvfM (327 aa).

A helical membrane pass occupies residues 9-29 (VAIVGASGVTGGSIVNGLLAL). NADP(+)-binding positions include 13–19 (GASGVTG) and K47. Catalysis depends on K130, which acts as the Proton acceptor.

This sequence belongs to the NmrA-type oxidoreductase family.

The protein localises to the membrane. The catalysed reaction is asnovolin K + AH2 = asnovolin A + A. It carries out the reaction chermesin D methyl ester + AH2 = asnovolin J + A. Its pathway is secondary metabolite biosynthesis; terpenoid biosynthesis. In terms of biological role, asnovolin J 5',6'-dehydrogenase; part of the gene cluster that mediates the biosynthesis of novofumigatonin, a heavily oxygenated meroterpenoid containing a unique orthoester moiety. The first step of the pathway is the synthesis of 3,5-dimethylorsellinic acid (DMOA) by the polyketide synthase nvfA via condensation of one acetyl-CoA starter unit with 3 malonyl-CoA units and 2 methylations. DMOA is then converted to farnesyl-DMOA by the farnesyltransferase nvfB. Epoxydation by FAD-dependent monooxygenase nvfK, followed by a protonation-initiated cyclization catalyzed by the terpene cyclase nvfL leads to the production of asnavolin H. The short chain dehydrogenase nvfC then as a 3-OH dehydrogenase of asnovolin H to yield chemesin D. There are two branches to synthesize asnovolin A from chemesin D. In one branch, chemesin D undergoes Baeyer-Villiger oxidation by nvfH, methylation by nvfJ, and enoyl reduction by the nvfM D enoylreductase that reduces the double bond between C-5'and C-6', to form respectively asnovolin I, asnovolin K, and asnovolin A. In the other branch, the methylation precedes the Baeyer-Villiger oxidation and the enoyl reduction to yield asnovolin A via the asnovolin J intermediate. Asnovolin A is further converted to fumigatonoid A by the Fe(II)/2-oxoglutarate-dependent dioxygenase nvfI that catalyzes an endoperoxidation reaction. The alpha/beta hydrolase nvfD then acts as an epimerase that converts fumigatonoid A to its C-5' epimer, which then undergoes spontaneous or nvfD-catalyzed lactonization. The following step utilizes the ketoreductase nvfG to produce fumigatonoid B. The dioxygenase nvfE further converts fumigatonoid B into fumigatonoid C. Finally the Fe(II)/2-oxoglutarate-dependent dioxygenase nvfF catalyzes two rounds of oxidation to transform fumigatonoid C into the end product, novofumigatonin A. The chain is Asnovolin J 5',6'-dehydrogenase nvfM from Aspergillus novofumigatus (strain IBT 16806).